The sequence spans 93 residues: Probable chloroethene reductive dehalogenase membrane anchor protein (93 aa).

Helical transmembrane passes span 3-23 (AIYF…FTWF), 35-55 (WVLG…TYAS), and 64-84 (SAWI…LFAA).

Belongs to the PceB family.

It localises to the cell membrane. Functionally, may act as a membrane anchor for the chloroethene reductive dehalogenase VcrA. This chain is Probable chloroethene reductive dehalogenase membrane anchor protein, found in Dehalococcoides mccartyi (strain VS).